Consider the following 401-residue polypeptide: Argininosuccinate synthase (401 aa).

9–17 provides a ligand contact to ATP; sequence AYSGGLDTS. Tyr86 provides a ligand contact to L-citrulline. Gly116 contacts ATP. L-aspartate is bound by residues Thr118, Asn122, and Asp123. Residue Asn122 participates in L-citrulline binding. L-citrulline-binding residues include Arg126, Ser174, Ser183, Glu259, and Tyr271.

This sequence belongs to the argininosuccinate synthase family. Type 1 subfamily. In terms of assembly, homotetramer.

It localises to the cytoplasm. It catalyses the reaction L-citrulline + L-aspartate + ATP = 2-(N(omega)-L-arginino)succinate + AMP + diphosphate + H(+). The protein operates within amino-acid biosynthesis; L-arginine biosynthesis; L-arginine from L-ornithine and carbamoyl phosphate: step 2/3. The chain is Argininosuccinate synthase from Bacillus thuringiensis subsp. konkukian (strain 97-27).